The following is a 102-amino-acid chain: Small ribosomal subunit protein uS17 (102 aa).

The interval 1–27 (MEQTEEHTDTHTDEQDEAVDRNDRKER) is disordered.

This sequence belongs to the universal ribosomal protein uS17 family. Part of the 30S ribosomal subunit.

Functionally, one of the primary rRNA binding proteins, it binds specifically to the 5'-end of 16S ribosomal RNA. The sequence is that of Small ribosomal subunit protein uS17 from Salinibacter ruber (strain DSM 13855 / M31).